The following is a 439-amino-acid chain: Transcriptional enhancer factor TEF-5 (439 aa).

The segment covering 1–12 (MASNSWTANSSP) has biased composition (polar residues). The segment at 1–34 (MASNSWTANSSPGEAREDGSEGLDKGLDNDAEGV) is disordered. A2 bears the N-acetylalanine mark. The segment covering 14–28 (EAREDGSEGLDKGLD) has biased composition (basic and acidic residues). Positions 28–104 (DNDAEGVWSP…QVLARKKVRE (77 aa)) form a DNA-binding region, TEA. S148 carries the phosphoserine modification. The transcriptional activation stretch occupies residues 173-439 (GPSQDIKPFA…QHHVYKLVKD (267 aa)).

In terms of assembly, interacts with YAP1 and WWTR1/TAZ. As to expression, expressed in embryos as well as in many adult tissues.

It localises to the nucleus. Transcription factor which plays a key role in the Hippo signaling pathway, a pathway involved in organ size control and tumor suppression by restricting proliferation and promoting apoptosis. The core of this pathway is composed of a kinase cascade wherein MST1/MST2, in complex with its regulatory protein SAV1, phosphorylates and activates LATS1/2 in complex with its regulatory protein MOB1, which in turn phosphorylates and inactivates YAP1 oncoprotein and WWTR1/TAZ. Acts by mediating gene expression of YAP1 and WWTR1/TAZ, thereby regulating cell proliferation, migration and epithelial mesenchymal transition (EMT) induction. The protein is Transcriptional enhancer factor TEF-5 (Tead3) of Mus musculus (Mouse).